The sequence spans 106 residues: Protein translation factor SUI1 homolog (106 aa).

Belongs to the SUI1 family.

Additional factor that functions in concert with eIF-2 and the initiator tRNA in directing the ribosome to the proper start site of translation. This chain is Protein translation factor SUI1 homolog, found in Acanthamoeba polyphaga mimivirus (APMV).